Here is a 229-residue protein sequence, read N- to C-terminus: Small ribosomal subunit protein uS3c (229 aa).

Residues 39–128 (LRDNLFKQYP…RIILTILKVQ (90 aa)) enclose the KH type-2 domain.

Belongs to the universal ribosomal protein uS3 family. As to quaternary structure, part of the 30S ribosomal subunit.

The protein resides in the plastid. It localises to the chloroplast. In Tupiella akineta (Green alga), this protein is Small ribosomal subunit protein uS3c (rps3).